We begin with the raw amino-acid sequence, 519 residues long: MQKNSILFVTLSAFTVFIWYFFFAQPSEQSYRQMMQLQNTVAVSESGVNKFKNADLNEFQIDDIYAKEEHINIETEQYKAVLTNKGGGVLSWSVKEKNGQWVDLVFPESAPVMANFPNLTYKVVSKSAEKIVFEYASKEGWKITKIYNLSDLYMHNLNISVEKNAKTPFPQIDLKWGPGLGTDSKELKENISLTRALVYTAVKPNKLKKLKDNFEPASLCKWTAVDNRYFLVAFIPKNSMDFDKILFSRLEKKHPCSVILKAAEPKDVDKKDYSVNFYLGPKDYKYLKTYDLGLEKTVDFGFFGFLGKIAFSILVFFYKLTHNYGWAIIMLTTIIQILVLPLTLKSFKSSAAMKRVQPVIKDIQTKYKDNPQRLKAEMLNIYQSQKVNPLGGCLPMLLQLPIFWAFFTMLRNAYELRNEGWILWVKDLSAADQFMQFGSFNLNLLPLMMGIGMFFQQRMTTVTSDPTQRKIMYIMPVIFTFMFWSFPSGLVLYWLTNSLISMIEQYFIMKKDAITVKHI.

A run of 6 helical transmembrane segments spans residues Ile6–Pro26, Val298–Tyr318, Tyr324–Leu344, Leu390–Leu410, Phe434–Phe454, and Ile471–Val491.

It belongs to the OXA1/ALB3/YidC family. Type 1 subfamily. In terms of assembly, interacts with the Sec translocase complex via SecD. Specifically interacts with transmembrane segments of nascent integral membrane proteins during membrane integration.

The protein localises to the cell inner membrane. In terms of biological role, required for the insertion and/or proper folding and/or complex formation of integral membrane proteins into the membrane. Involved in integration of membrane proteins that insert both dependently and independently of the Sec translocase complex, as well as at least some lipoproteins. Aids folding of multispanning membrane proteins. The protein is Membrane protein insertase YidC of Endomicrobium trichonymphae.